A 214-amino-acid polypeptide reads, in one-letter code: Pyridoxine/pyridoxamine 5'-phosphate oxidase (214 aa).

Substrate is bound by residues 10 to 13 (RLNY) and lysine 68. FMN-binding positions include 63–68 (RMVLLK), 78–79 (YT), lysine 85, and glutamine 107. Residues tyrosine 125, arginine 129, and serine 133 each contribute to the substrate site. Residues 142–143 (QS) and tryptophan 187 each bind FMN. Substrate is bound at residue 193–195 (RLH). FMN is bound at residue arginine 197.

Belongs to the pyridoxamine 5'-phosphate oxidase family. Homodimer. The cofactor is FMN.

It carries out the reaction pyridoxamine 5'-phosphate + O2 + H2O = pyridoxal 5'-phosphate + H2O2 + NH4(+). It catalyses the reaction pyridoxine 5'-phosphate + O2 = pyridoxal 5'-phosphate + H2O2. The protein operates within cofactor metabolism; pyridoxal 5'-phosphate salvage; pyridoxal 5'-phosphate from pyridoxamine 5'-phosphate: step 1/1. Its pathway is cofactor metabolism; pyridoxal 5'-phosphate salvage; pyridoxal 5'-phosphate from pyridoxine 5'-phosphate: step 1/1. Catalyzes the oxidation of either pyridoxine 5'-phosphate (PNP) or pyridoxamine 5'-phosphate (PMP) into pyridoxal 5'-phosphate (PLP). In Synechocystis sp. (strain ATCC 27184 / PCC 6803 / Kazusa), this protein is Pyridoxine/pyridoxamine 5'-phosphate oxidase.